Reading from the N-terminus, the 203-residue chain is Snake venom metalloproteinase fibrolase (203 aa).

Residue Q1 is modified to Pyrrolidone carboxylic acid. Residues 7-203 (RYVQLVIVAD…NNPQCILNKP (197 aa)) form the Peptidase M12B domain. Disulfide bonds link C118–C198, C158–C182, and C160–C165. H143 contributes to the Zn(2+) binding site. Residue E144 is part of the active site. The Zn(2+) site is built by H147 and H153.

This sequence belongs to the venom metalloproteinase (M12B) family. P-I subfamily. As to quaternary structure, monomer. Requires Zn(2+) as cofactor. Expressed by the venom gland.

It localises to the secreted. It carries out the reaction Hydrolysis of 14-Ala-|-Leu-15 in insulin B chain and 413-Lys-|-Leu-414 in alpha-chain of fibrinogen.. With respect to regulation, is inhibited by EDTA, o-phenanthroline and tetraethylenepentamine. Its function is as follows. Snake venom zinc metalloprotease that exhibits direct fibrinolytic activity. The chain is Snake venom metalloproteinase fibrolase from Agkistrodon contortrix contortrix (Southern copperhead).